A 556-amino-acid chain; its full sequence is 2-succinyl-5-enolpyruvyl-6-hydroxy-3-cyclohexene-1-carboxylate synthase (556 aa).

This sequence belongs to the TPP enzyme family. MenD subfamily. As to quaternary structure, homodimer. It depends on Mg(2+) as a cofactor. Mn(2+) serves as cofactor. The cofactor is thiamine diphosphate.

It carries out the reaction isochorismate + 2-oxoglutarate + H(+) = 5-enolpyruvoyl-6-hydroxy-2-succinyl-cyclohex-3-ene-1-carboxylate + CO2. It participates in quinol/quinone metabolism; 1,4-dihydroxy-2-naphthoate biosynthesis; 1,4-dihydroxy-2-naphthoate from chorismate: step 2/7. The protein operates within quinol/quinone metabolism; menaquinone biosynthesis. Its function is as follows. Catalyzes the thiamine diphosphate-dependent decarboxylation of 2-oxoglutarate and the subsequent addition of the resulting succinic semialdehyde-thiamine pyrophosphate anion to isochorismate to yield 2-succinyl-5-enolpyruvyl-6-hydroxy-3-cyclohexene-1-carboxylate (SEPHCHC). The sequence is that of 2-succinyl-5-enolpyruvyl-6-hydroxy-3-cyclohexene-1-carboxylate synthase from Salmonella paratyphi A (strain AKU_12601).